We begin with the raw amino-acid sequence, 467 residues long: Cytochrome c-552 (467 aa).

The signal sequence occupies residues 1-27; that stretch reads MVKKLTGKSFALSALVAASFVAAGAMA. A heme c-binding site is contributed by His87. Residues Cys115, Cys118, and Lys119 each coordinate heme. Heme c is bound by residues Cys153, Cys156, His157, Cys195, Cys198, and His199. Glu201, Tyr202, Lys250, and Gln252 together coordinate Ca(2+). Tyr202 contacts substrate. His253 contacts substrate. The heme c site is built by His264, Cys271, Cys274, His275, His290, Cys303, Cys306, His307, and His382.

It belongs to the cytochrome c-552 family. The cofactor is Ca(2+). Heme c is required as a cofactor.

Its subcellular location is the periplasm. The catalysed reaction is 6 Fe(III)-[cytochrome c] + NH4(+) + 2 H2O = 6 Fe(II)-[cytochrome c] + nitrite + 8 H(+). It functions in the pathway nitrogen metabolism; nitrate reduction (assimilation). Its function is as follows. Catalyzes the reduction of nitrite to ammonia, consuming six electrons in the process. The protein is Cytochrome c-552 of Shewanella amazonensis (strain ATCC BAA-1098 / SB2B).